The following is a 354-amino-acid chain: Chorismate synthase (354 aa).

The NADP(+) site is built by arginine 48 and arginine 54. Residues 125–127 (RSS), 238–239 (NA), glycine 278, 293–297 (KPTSS), and arginine 319 contribute to the FMN site.

It belongs to the chorismate synthase family. As to quaternary structure, homotetramer. The cofactor is FMNH2.

It catalyses the reaction 5-O-(1-carboxyvinyl)-3-phosphoshikimate = chorismate + phosphate. It participates in metabolic intermediate biosynthesis; chorismate biosynthesis; chorismate from D-erythrose 4-phosphate and phosphoenolpyruvate: step 7/7. Functionally, catalyzes the anti-1,4-elimination of the C-3 phosphate and the C-6 proR hydrogen from 5-enolpyruvylshikimate-3-phosphate (EPSP) to yield chorismate, which is the branch point compound that serves as the starting substrate for the three terminal pathways of aromatic amino acid biosynthesis. This reaction introduces a second double bond into the aromatic ring system. This chain is Chorismate synthase, found in Buchnera aphidicola subsp. Acyrthosiphon pisum (strain 5A).